The chain runs to 195 residues: Endoribonuclease YbeY (195 aa).

Positions 153, 157, and 163 each coordinate Zn(2+).

Belongs to the endoribonuclease YbeY family. Requires Zn(2+) as cofactor.

The protein localises to the cytoplasm. In terms of biological role, single strand-specific metallo-endoribonuclease involved in late-stage 70S ribosome quality control and in maturation of the 3' terminus of the 16S rRNA. In Prochlorococcus marinus (strain SARG / CCMP1375 / SS120), this protein is Endoribonuclease YbeY.